A 202-amino-acid polypeptide reads, in one-letter code: Securin (202 aa).

Ala2 is subject to N-acetylalanine. The interval 35 to 90 is disordered; sequence LDGRSQVSTPRFGKTFDAPPALPKATRKALGTVNRATEKSVKTKGPLKQKQPSFSA. A D-box motif is present at residues 61-64; it reads RKAL. Short sequence motifs (TEK-box) lie at residues 71 to 73 and 94 to 96; these read TEK. The SH3-binding motif lies at 163–173; sequence PPSPVKMPSPP. Ser165 carries the phosphoserine; by CDK1 modification.

Belongs to the securin family. In terms of assembly, interacts with RPS10 and DNAJA1. Interacts with the caspase-like ESPL1, and prevents its protease activity probably by covering its active site. Interacts with TP53 and blocks its activity probably by blocking its binding to DNA. Interacts with the Ku 70 kDa subunit of ds-DNA kinase. Interacts with PTTG1IP. Phosphorylated at Ser-165 by CDK1 during mitosis. Post-translationally, phosphorylated in vitro by ds-DNA kinase. In terms of processing, ubiquitinated through 'Lys-11' linkage of ubiquitin moieties by the anaphase promoting complex (APC) at the onset of anaphase, conducting to its degradation. 'Lys-11'-linked ubiquitination is mediated by the E2 ligase UBE2C/UBCH10. As to expression, expressed at low level in most tissues, except in adult testis, where it is highly expressed. Overexpressed in many patients suffering from pituitary adenomas, primary epithelial neoplasias, and esophageal cancer.

It is found in the cytoplasm. It localises to the nucleus. Its function is as follows. Regulatory protein, which plays a central role in chromosome stability, in the p53/TP53 pathway, and DNA repair. Probably acts by blocking the action of key proteins. During the mitosis, it blocks Separase/ESPL1 function, preventing the proteolysis of the cohesin complex and the subsequent segregation of the chromosomes. At the onset of anaphase, it is ubiquitinated, conducting to its destruction and to the liberation of ESPL1. Its function is however not limited to a blocking activity, since it is required to activate ESPL1. Negatively regulates the transcriptional activity and related apoptosis activity of TP53. The negative regulation of TP53 may explain the strong transforming capability of the protein when it is overexpressed. May also play a role in DNA repair via its interaction with Ku, possibly by connecting DNA damage-response pathways with sister chromatid separation. The protein is Securin (PTTG1) of Homo sapiens (Human).